We begin with the raw amino-acid sequence, 284 residues long: Circadian clock oscillator protein KaiA (284 aa).

A psR domain, binds oxidized quinones region spans residues 1-135 (MLSQIAICIW…LRLAPVETMA (135 aa)). The 164-residue stretch at 1 to 164 (MLSQIAICIW…DLAQRLQERL (164 aa)) folds into the KaiA N-terminal domain. The flexible linker stretch occupies residues 165–173 (GYLGVYYKR). The region spanning 174–282 (DPDRFLRNLP…CEMYRRSIPR (109 aa)) is the KaiA C-terminal domain.

It belongs to the KaiA family. As to quaternary structure, homodimer. The KaiABC complex composition changes during the circadian cycle to control KaiC phosphorylation. Complexes KaiC(6), KaiA(2-4):KaiC(6), KaiB(6):KaiC(6) and KaiC(6):KaiB(6):KaiA(12) are among the most important forms, many form cooperatively. The KaiA:KaiB complex is only found at 20-24 hours in the circadian cycle (subjective night). Binds to the C-terminal A-loop of KaiC via a coiled-coil structure. KaiA and CikA compete for binding to KaiB(fs). CikA copurifies with this protein in the clock complex. Interacts with LdpA.

With respect to regulation, binding of oxidized quinones (produced as darkness falls) prevents KaiA from stimulating KaiC autophosphorylation. Key component of the KaiABC oscillator complex, which constitutes the main circadian regulator in cyanobacteria. Complex composition changes during the circadian cycle to control KaiC phosphorylation. KaiA stimulates KaiC autophosphorylation, while KaiB sequesters KaiA, leading to KaiC autodephosphorylation. KaiA binding to the KaiC CII domain during the subjective day yields KaiA(2-4):KaiC(6) complexes which stimulate KaiC autophosphorylation. A KaiA dimer is sufficient to enhance KaiC hexamer phosphorylation. Phospho-Ser-431 KaiC accumulation triggers binding of KaiB during the subjective night to form the KaiB(6):KaiC(6) complex, leading to changes in the output regulators CikA and SasA. KaiB(6):KaiC(6) formation exposes a site for KaiA binding on KaiB that sequesters KaiA from KaiC's CII domain, making the KaiC(6):KaiB(6):KaiA(12) complex resulting in KaiC autodephosphorylation. Complete dephosphorylation of KaiC leads to dissociation of KaiA(2):KaiB(1), completing 1 cycle of the Kai oscillator. In terms of biological role, circadian oscillations can be generated in vitro by incubating KaiA, KaiB and KaiC with 1 mM ATP. The cycle is self-sustainable for at least 3 cycles and resistant to temperature changes. A very robust clock is reconstituted with KaiA, KaiB, KaiC, SasA, CikA and RpaA; output is measured by transcription from an appropriate reporter. Its function is as follows. KaiA binds oxidized quinones via its N-terminal PsR domain and is able to sense redox signals directly; quinone analog DBMIB (2,5-dibromo-3-methyl-6-isopropyl-p-benzoquinone) blocks KaiA stimulation of KaiC phosphorylation. The homodimer binds up to 8 quinones in the crystal structure, 3 in the PsR domain and 1 via the C-terminal helical bundle. Binding of oxidized quinone to the KaiA C-terminal domain reduces the phosphorylation of KaiC slightly; quinones may interact in a complex manner with KaiA to mediate clock input. In Synechococcus elongatus (strain ATCC 33912 / PCC 7942 / FACHB-805) (Anacystis nidulans R2), this protein is Circadian clock oscillator protein KaiA.